The chain runs to 401 residues: Glyceraldehyde-3-phosphate dehydrogenase A, chloroplastic (401 aa).

The N-terminal 65 residues, 1-65, are a transit peptide targeting the chloroplast; it reads MASNMLSIAN…RSSQNGVVEA (65 aa). NADP(+) contacts are provided by residues 76–77, aspartate 100, and arginine 145; that span reads RI. D-glyceraldehyde 3-phosphate contacts are provided by residues 217–219, threonine 248, arginine 263, 276–277, and arginine 299; these read SCT and TG. The active-site Nucleophile is cysteine 218. Asparagine 381 provides a ligand contact to NADP(+).

Belongs to the glyceraldehyde-3-phosphate dehydrogenase family. Tetramer of either four A chains (GAPDH 2) or two A and two B chains (GAPDH 1).

The protein localises to the plastid. It is found in the chloroplast. It carries out the reaction D-glyceraldehyde 3-phosphate + phosphate + NADP(+) = (2R)-3-phospho-glyceroyl phosphate + NADPH + H(+). The protein operates within carbohydrate biosynthesis; Calvin cycle. The protein is Glyceraldehyde-3-phosphate dehydrogenase A, chloroplastic (GAPA) of Spinacia oleracea (Spinach).